We begin with the raw amino-acid sequence, 362 residues long: Aspartate carbamoyltransferase catalytic subunit (362 aa).

Residues M1–M22 form a disordered region. A compositionally biased stretch (low complexity) spans T7–S20. Carbamoyl phosphate-binding residues include R100 and T101. Residue K128 participates in L-aspartate binding. Carbamoyl phosphate contacts are provided by R150, H180, and Q183. Residues R214 and R269 each coordinate L-aspartate. Carbamoyl phosphate contacts are provided by G310 and P311.

Belongs to the aspartate/ornithine carbamoyltransferase superfamily. ATCase family. In terms of assembly, heterododecamer (2C3:3R2) of six catalytic PyrB chains organized as two trimers (C3), and six regulatory PyrI chains organized as three dimers (R2).

The catalysed reaction is carbamoyl phosphate + L-aspartate = N-carbamoyl-L-aspartate + phosphate + H(+). It participates in pyrimidine metabolism; UMP biosynthesis via de novo pathway; (S)-dihydroorotate from bicarbonate: step 2/3. Functionally, catalyzes the condensation of carbamoyl phosphate and aspartate to form carbamoyl aspartate and inorganic phosphate, the committed step in the de novo pyrimidine nucleotide biosynthesis pathway. The polypeptide is Aspartate carbamoyltransferase catalytic subunit (Psychrobacter sp. (strain PRwf-1)).